Consider the following 637-residue polypeptide: 5-hmdU DNA kinase (637 aa).

Residues 249–269 (AEKGVKRGKKGRKTSPVAKTL) are disordered.

Belongs to the thymidylate kinase family. 5-hmdU DNA kinase subfamily.

It carries out the reaction 5-hydroxymethyl-dUMP in DNA + ATP = 5-phosphomethyl-dUMP in DNA + ADP + H(+). Phosphorylates 5-hydroxymethyluracil (5hmdU) into 5-phosphomethyl-2'-deoxyuridine (5- PmdU) on DNA as a step in the pathway leading to thymidine hypermodifications in the viral genome. The phosphate is added internally to the DNA polymer. As a final result of the pathway of hypermodification, alpha-glutamylthymidine (YdTMP) substitutes for about 20% of the thymidines in the viral DNA, the 80% left are dTMP. These modifications probably prevent degradation of viral genome by the host restriction-modification antiviral defense system. This chain is 5-hmdU DNA kinase, found in Bacillus phage SP10 (Bacillus phage SP-10).